The primary structure comprises 173 residues: Ribosome maturation factor RimM (173 aa).

Positions E95 to L169 constitute a PRC barrel domain.

The protein belongs to the RimM family. Binds ribosomal protein uS19.

The protein resides in the cytoplasm. In terms of biological role, an accessory protein needed during the final step in the assembly of 30S ribosomal subunit, possibly for assembly of the head region. Essential for efficient processing of 16S rRNA. May be needed both before and after RbfA during the maturation of 16S rRNA. It has affinity for free ribosomal 30S subunits but not for 70S ribosomes. The sequence is that of Ribosome maturation factor RimM from Lactobacillus gasseri (strain ATCC 33323 / DSM 20243 / BCRC 14619 / CIP 102991 / JCM 1131 / KCTC 3163 / NCIMB 11718 / NCTC 13722 / AM63).